The following is a 159-amino-acid chain: Ribosomal RNA large subunit methyltransferase H (159 aa).

S-adenosyl-L-methionine is bound by residues Leu76, Gly108, and 127–132 (FGRLTY).

The protein belongs to the RNA methyltransferase RlmH family. In terms of assembly, homodimer.

It is found in the cytoplasm. It catalyses the reaction pseudouridine(1915) in 23S rRNA + S-adenosyl-L-methionine = N(3)-methylpseudouridine(1915) in 23S rRNA + S-adenosyl-L-homocysteine + H(+). Its function is as follows. Specifically methylates the pseudouridine at position 1915 (m3Psi1915) in 23S rRNA. The protein is Ribosomal RNA large subunit methyltransferase H of Enterococcus faecalis (strain ATCC 700802 / V583).